The chain runs to 229 residues: Imidazoleglycerol-phosphate dehydratase (229 aa).

It belongs to the imidazoleglycerol-phosphate dehydratase family.

The catalysed reaction is D-erythro-1-(imidazol-4-yl)glycerol 3-phosphate = 3-(imidazol-4-yl)-2-oxopropyl phosphate + H2O. The protein operates within amino-acid biosynthesis; L-histidine biosynthesis; L-histidine from 5-phospho-alpha-D-ribose 1-diphosphate: step 6/9. In Neurospora crassa (strain ATCC 24698 / 74-OR23-1A / CBS 708.71 / DSM 1257 / FGSC 987), this protein is Imidazoleglycerol-phosphate dehydratase.